The chain runs to 135 residues: MAQAFQFELVSPERLLLSAQVTEVVIPGSEGYLTALAGHSPLMTTIMPGVVSVKLADGKTDSYVVFGGFADITPQGCTVLAESATHVDDIDPADIQHRIDHARKVLEDASSNEHRTKAEIFLHQLMTLQGAILPA.

Belongs to the ATPase epsilon chain family. In terms of assembly, F-type ATPases have 2 components, CF(1) - the catalytic core - and CF(0) - the membrane proton channel. CF(1) has five subunits: alpha(3), beta(3), gamma(1), delta(1), epsilon(1). CF(0) has three main subunits: a, b and c.

It is found in the cell inner membrane. Its function is as follows. Produces ATP from ADP in the presence of a proton gradient across the membrane. This chain is ATP synthase epsilon chain, found in Brucella abortus (strain S19).